Here is a 412-residue protein sequence, read N- to C-terminus: Argininosuccinate synthase (412 aa).

10–18 (AYSGGLDTS) serves as a coordination point for ATP. Tyrosine 89 contributes to the L-citrulline binding site. Glycine 119 serves as a coordination point for ATP. Residues threonine 121, asparagine 125, and aspartate 126 each coordinate L-aspartate. Asparagine 125 provides a ligand contact to L-citrulline. Residues arginine 129, serine 177, glutamate 261, and tyrosine 273 each coordinate L-citrulline.

This sequence belongs to the argininosuccinate synthase family. Type 1 subfamily. In terms of assembly, homotetramer.

The protein resides in the cytoplasm. It carries out the reaction L-citrulline + L-aspartate + ATP = 2-(N(omega)-L-arginino)succinate + AMP + diphosphate + H(+). Its pathway is amino-acid biosynthesis; L-arginine biosynthesis; L-arginine from L-ornithine and carbamoyl phosphate: step 2/3. The sequence is that of Argininosuccinate synthase from Bifidobacterium longum (strain NCC 2705).